Reading from the N-terminus, the 679-residue chain is Stress-70 protein, mitochondrial (679 aa).

Residues 1–46 constitute a mitochondrion transit peptide; it reads MISASRAAAARLVGAAASRGPTAARHQDSWNGLSHEAFRLVSRRDY. Positions 1–432 are interaction with NFS1; sequence MISASRAAAA…IQGGVLAGDV (432 aa). ADP contacts are provided by T63 and N64. The segment at 63–431 is nucleotide-binding domain (NBD); the sequence is TNSCVAVMEG…AIQGGVLAGD (369 aa). Residue K76 is modified to N6-acetyllysine. T87 is subject to Phosphothreonine. 2 positions are modified to N6-acetyllysine; alternate: K135 and K138. Residues K135 and K138 each carry the N6-succinyllysine; alternate modification. Residue K143 is modified to N6-acetyllysine. At K206 the chain carries N6-acetyllysine; alternate. Position 206 is an N6-succinyllysine; alternate (K206). K206 bears the N6-malonyllysine; alternate mark. N6-acetyllysine occurs at positions 234 and 288. At K300 the chain carries N6-acetyllysine; alternate. N6-succinyllysine; alternate is present on K300. ADP-binding residues include E313, K316, and S320. K368 carries the post-translational modification N6-succinyllysine. The ADP site is built by G388 and R391. Position 394 is an N6-succinyllysine (K394). S408 carries the post-translational modification Phosphoserine. The tract at residues 432–441 is interdomain linker; that stretch reads VTDVLLLDVT. The tract at residues 432 to 679 is interaction with FXN and ISCU; the sequence is VTDVLLLDVT…QKEDQKEEKQ (248 aa). The tract at residues 442-679 is substrate-binding domain (SBD); that stretch reads PLSLGIETLG…QKEDQKEEKQ (238 aa). Omega-N-methylarginine is present on R513. N6-acetyllysine; alternate occurs at positions 567 and 600. Residues K567 and K600 each carry the N6-succinyllysine; alternate modification. Position 610 is an N6-succinyllysine (K610). K612 is modified (N6-acetyllysine). The residue at position 646 (K646) is an N6-acetyllysine; alternate. K646 carries the post-translational modification N6-succinyllysine; alternate. The interval 656–679 is disordered; that stretch reads ASEREGSGSSGTGEQKEDQKEEKQ. The segment covering 669–679 has biased composition (basic and acidic residues); sequence EQKEDQKEEKQ.

This sequence belongs to the heat shock protein 70 family. In terms of assembly, interacts strongly with the intermediate form of FXN and weakly with its mature form. Interacts with HSCB. Associates with the mitochondrial contact site and cristae organizing system (MICOS) complex, composed of at least MICOS10/MIC10, CHCHD3/MIC19, CHCHD6/MIC25, APOOL/MIC27, IMMT/MIC60, APOO/MIC23/MIC26 and QIL1/MIC13. This complex was also known under the names MINOS or MitOS complex. The MICOS complex associates with mitochondrial outer membrane proteins SAMM50, MTX1, MTX2 and DNAJC11, mitochondrial inner membrane protein TMEM11 and with HSPA9. Interacts with DNLZ, the interaction is required to prevent self-aggregation. Interacts with TESPA1. Interacts with PDPN. Interacts with NFU1, NFS1 and ISCU. Interacts with TP53; the interaction promotes TP53 degradation. Interacts (via SBD domain) with UBXN2A; the interaction with UBXN2A inhibits HSPA9 interaction with and degradation of TP53, thereby promotes TP53 translocation to the nucleus. Interacts with ITPR1 AND VDAC1; this interaction couples ITPR1 to VDAC1. Component of the TIM23 mitochondrial inner membrane pre-sequence translocase complex.

It is found in the mitochondrion. The protein resides in the nucleus. It localises to the nucleolus. The protein localises to the cytoplasm. Its subcellular location is the mitochondrion matrix. It catalyses the reaction ATP + H2O = ADP + phosphate + H(+). Its activity is regulated as follows. The chaperone activity is regulated by ATP-induced allosteric coupling of the nucleotide-binding (NBD) and substrate-binding (SBD) domains. ATP binding in the NBD leads to a conformational change in the NBD, which is transferred through the interdomain linker (IDL) to the substrate-binding domain (SBD). This elicits a reduced substrate affinity and a faster substrate exchange rate. Upon hydrolysis of ATP to ADP, the protein undergoes a conformational change that increases its affinity for substrate proteins. It cycles through repeated phases of ATP hydrolysis and nucleotide exchange, facilitating repeated cycles of substrate binding and release. Functions in collaboration with co-chaperones. Functions with the co-chaperone, DNLZ, to maintain solubility and regulate ATP hydrolysis. Nucleotide exchange factors, GRPEL1 and GRPEL2, accelerate nucleotide exchange. In terms of biological role, mitochondrial chaperone that plays a key role in mitochondrial protein import, folding, and assembly. Plays an essential role in the protein quality control system, the correct folding of proteins, the re-folding of misfolded proteins, and the targeting of proteins for subsequent degradation. These processes are achieved through cycles of ATP binding, ATP hydrolysis, and ADP release, mediated by co-chaperones. In mitochondria, it associates with the TIM (translocase of the inner membrane) protein complex to assist in the import and folding of mitochondrial proteins. Plays an important role in mitochondrial iron-sulfur cluster (ISC) biogenesis, interacts with and stabilizes ISC cluster assembly proteins FXN, NFU1, NFS1 and ISCU. Regulates erythropoiesis via stabilization of ISC assembly. Regulates mitochondrial calcium-dependent apoptosis by coupling two calcium channels, ITPR1 and VDAC1, at the mitochondria-associated endoplasmic reticulum (ER) membrane to facilitate calcium transport from the ER lumen to the mitochondria intermembrane space, providing calcium for the downstream calcium channel MCU, which releases it into the mitochondrial matrix. Although primarily located in the mitochondria, it is also found in other cellular compartments. In the cytosol, it associates with proteins involved in signaling, apoptosis, or senescence. It may play a role in cell cycle regulation via its interaction with and promotion of degradation of TP53. May play a role in the control of cell proliferation and cellular aging. Protects against reactive oxygen species (ROS). Extracellular HSPA9 plays a cytoprotective role by preventing cell lysis following immune attack by the membrane attack complex by disrupting formation of the complex. This chain is Stress-70 protein, mitochondrial, found in Homo sapiens (Human).